Consider the following 284-residue polypeptide: Parvulin-like PPIase (284 aa).

The first 20 residues, 1–20 (MKKLSIVLLSVSMLSSIAFA), serve as a signal peptide directing secretion. Residues 139–232 (KEQIKVAHIL…YGWHIIKVLE (94 aa)) form the PpiC domain.

This sequence belongs to the PpiC/parvulin rotamase family.

The protein localises to the cell outer membrane. The catalysed reaction is [protein]-peptidylproline (omega=180) = [protein]-peptidylproline (omega=0). The chain is Parvulin-like PPIase (plp) from Rickettsia bellii (strain RML369-C).